The primary structure comprises 708 residues: Matrix metalloproteinase-9 (708 aa).

The N-terminal stretch at 1–19 (MSPWQPLLLVLLALGYSFA) is a signal peptide. The propeptide at 20–107 (APHQRQPTYV…PRCGVPDVGK (88 aa)) is activation peptide. A glycan (N-linked (GlcNAc...) asparagine) is linked at N39. Residues 98–105 (PRCGVPDV) carry the Cysteine switch motif. Position 100 (C100) interacts with Zn(2+). N121 carries N-linked (GlcNAc...) asparagine glycosylation. Ca(2+) is bound by residues D132 and D166. Zn(2+)-binding residues include H176 and D178. Residues D183, G184, D186, and L188 each coordinate Ca(2+). Zn(2+) is bound at residue H191. Positions 198, 200, and 202 each coordinate Ca(2+). Position 204 (H204) interacts with Zn(2+). 3 residues coordinate Ca(2+): D206, D207, and E209. Fibronectin type-II domains lie at 226–274 (ANGA…FCPS), 284–332 (GDGK…FCPT), and 343–391 (SAGE…FCPD). Intrachain disulfides connect C231–C257, C245–C272, C289–C315, C303–C330, C348–C374, and C362–C389. H402 serves as a coordination point for Zn(2+). E403 is an active-site residue. Residues H406 and H412 each coordinate Zn(2+). Residues 441-520 (HHLYGRGSKP…SSTPDDNPCN (80 aa)) form a disordered region. The span at 480–490 (PTGGPTVAPTG) shows a compositional bias: low complexity. Pro residues predominate over residues 491–502 (APSPGPTGPPTA). A disulfide bridge links C519 with C707. Hemopexin repeat units lie at residues 521–566 (VDVF…WPAF), 567–611 (PSKL…GLGS), 613–660 (VTLV…FSGV), and 661–707 (PWNS…LLQC).

The protein belongs to the peptidase M10A family. In terms of assembly, exists as monomer or homodimer; disulfide-linked. Also exists as heterodimer with LCN2. Macrophages and transformed cell lines produce only the monomeric form. Interacts with ECM1. The cofactor is Zn(2+). It depends on Ca(2+) as a cofactor. N- and O-glycosylated.

It is found in the secreted. Its subcellular location is the extracellular space. The protein resides in the extracellular matrix. It carries out the reaction Cleavage of gelatin types I and V and collagen types IV and V.. In terms of biological role, matrix metalloproteinase that plays an essential role in local proteolysis of the extracellular matrix and in leukocyte migration. Could play a role in bone osteoclastic resorption. Cleaves KiSS1 at a Gly-|-Leu bond. Cleaves NINJ1 to generate the Secreted ninjurin-1 form. Cleaves type IV and type V collagen into large C-terminal three quarter fragments and shorter N-terminal one quarter fragments. Degrades fibronectin but not laminin or Pz-peptide. This Rattus norvegicus (Rat) protein is Matrix metalloproteinase-9 (Mmp9).